We begin with the raw amino-acid sequence, 328 residues long: Malate dehydrogenase (328 aa).

NAD(+) is bound at residue 11–17 (GAAGQIG). The substrate site is built by R94 and R100. Residues N107, Q114, and 131–133 (VGN) each bind NAD(+). Positions 133 and 164 each coordinate substrate. The active-site Proton acceptor is H189.

Belongs to the LDH/MDH superfamily. MDH type 2 family.

It carries out the reaction (S)-malate + NAD(+) = oxaloacetate + NADH + H(+). Catalyzes the reversible oxidation of malate to oxaloacetate. This chain is Malate dehydrogenase, found in Xylella fastidiosa (strain Temecula1 / ATCC 700964).